We begin with the raw amino-acid sequence, 529 residues long: UDP-glucuronosyltransferase 2B9 (529 aa).

A signal peptide spans 1–21 (MSVKWTSVILLIQLSFYFSSG). N67, N68, and N88 each carry an N-linked (GlcNAc...) asparagine glycan. Residues 494–514 (IGFLLACVATVIFVIMKCCLF) traverse the membrane as a helical segment.

This sequence belongs to the UDP-glycosyltransferase family.

The protein resides in the microsome membrane. The protein localises to the endoplasmic reticulum membrane. The catalysed reaction is glucuronate acceptor + UDP-alpha-D-glucuronate = acceptor beta-D-glucuronoside + UDP + H(+). UDPGT is of major importance in the conjugation and subsequent elimination of potentially toxic xenobiotics and endogenous compounds. This isozyme is active on C18, C19, and C21 steroids, bile acids, and several xenobiotics including eugenol, 1-naphthol, and p-nitrophenol. The chain is UDP-glucuronosyltransferase 2B9 (UGT2B9) from Macaca fascicularis (Crab-eating macaque).